The following is a 200-amino-acid chain: Ribonuclease HII (200 aa).

An RNase H type-2 domain is found at 1–200 (MRYGGVDEAG…EINKKLTDFI (200 aa)). 3 residues coordinate a divalent metal cation: Asp7, Glu8, and Asp99.

It belongs to the RNase HII family. It depends on Mn(2+) as a cofactor. The cofactor is Mg(2+).

The protein localises to the cytoplasm. The catalysed reaction is Endonucleolytic cleavage to 5'-phosphomonoester.. Functionally, endonuclease that specifically degrades the RNA of RNA-DNA hybrids. The chain is Ribonuclease HII from Nanoarchaeum equitans (strain Kin4-M).